A 562-amino-acid chain; its full sequence is TBC1 domain family member 24 (562 aa).

Residues Lys-36, Arg-40, Lys-238, Arg-242, and 293–297 contribute to the a 1,2-diacyl-sn-glycero-3-phospho-(1D-myo-inositol) site; that span reads RLFSR. One can recognise a Rab-GAP TBC domain in the interval 42 to 259; it reads GHWAKSHTLR…FFHKVRGGQP (218 aa). One can recognise a TLDc domain in the interval 337-549; it reads EIVSVKEMRD…ISIIEVWGFK (213 aa). Residues 450 to 471 are disordered; it reads NSSSADKEANSSQSDKDGIDPS. The segment covering 454–468 has biased composition (basic and acidic residues); that stretch reads ADKEANSSQSDKDGI.

As to quaternary structure, interacts with ARF6.

It localises to the cell membrane. The protein localises to the cytoplasm. The protein resides in the cytoplasmic vesicle membrane. It is found in the presynapse. Its function is as follows. May act as a GTPase-activating protein for Rab family protein(s). Involved in neuronal projections development, probably through a negative modulation of ARF6 function. Involved in the regulation of synaptic vesicle trafficking. The chain is TBC1 domain family member 24 (tbc1d24) from Xenopus laevis (African clawed frog).